Reading from the N-terminus, the 464-residue chain is NADH-quinone oxidoreductase subunit N 1 (464 aa).

14 helical membrane passes run 6-26, 33-53, 65-85, 98-118, 122-142, 155-175, 192-212, 237-257, 259-279, 285-305, 312-332, 356-376, 401-421, and 436-456; these read ILPEAILAIGILTVFILELFL, FLSVLAFIFVVLSGYSIFFVN, VDALNLIGKLFILAVTGFVLL, YGELPYLYLIATLGLMVMISS, AIIFTGLELASITMYILVGLF, YLVIGTTGTSMYALGSALVYA, FALGVILIISALALKVSAVPF, IGMYFLFVKLTMYLFSAFPDW, YVVMLLAVLSMFYGNIVAYAQ, LLAYSSIAHAGYFLTALTAVD, LLFYVFVYALATVGAFTVLAI, LASMLALFLFALIGIPPAAVF, ASLISAGYYLKVIVYMFLYSG, and FTVLGTAFLVIFFGLFPHVVL.

This sequence belongs to the complex I subunit 2 family. As to quaternary structure, NDH-1 is composed of 14 different subunits. Subunits NuoA, H, J, K, L, M, N constitute the membrane sector of the complex.

It localises to the cell inner membrane. It carries out the reaction a quinone + NADH + 5 H(+)(in) = a quinol + NAD(+) + 4 H(+)(out). Its function is as follows. NDH-1 shuttles electrons from NADH, via FMN and iron-sulfur (Fe-S) centers, to quinones in the respiratory chain. The immediate electron acceptor for the enzyme in this species is believed to be ubiquinone. Couples the redox reaction to proton translocation (for every two electrons transferred, four hydrogen ions are translocated across the cytoplasmic membrane), and thus conserves the redox energy in a proton gradient. This Aquifex aeolicus (strain VF5) protein is NADH-quinone oxidoreductase subunit N 1.